The chain runs to 228 residues: Protein JAZ7 (228 aa).

In terms of domain architecture, Tify spans 101–136 (LSPNESTLTIFYMGEVHIFPGISPEKAELIIDLVSK). The short motif at 176 to 199 (MARRATLARFLEKRKHRLIKARPY) is the Jas element. The short motif at 177–184 (ARRATLAR) is the Nuclear localization signal element.

It belongs to the TIFY/JAZ family. In terms of assembly, interacts with MYC2 (via N-terminus). JAZ7 competes with MED25 for binding to MYC2. Interacts with MTB1 (via N-terminus).

It is found in the nucleus. Functionally, repressor of jasmonate responses. In Solanum lycopersicum (Tomato), this protein is Protein JAZ7.